The sequence spans 167 residues: Crossover junction endodeoxyribonuclease RuvC (167 aa).

Residues Asp11, Glu71, and Asp143 contribute to the active site. Mg(2+)-binding residues include Asp11, Glu71, and Asp143.

Belongs to the RuvC family. Homodimer which binds Holliday junction (HJ) DNA. The HJ becomes 2-fold symmetrical on binding to RuvC with unstacked arms; it has a different conformation from HJ DNA in complex with RuvA. In the full resolvosome a probable DNA-RuvA(4)-RuvB(12)-RuvC(2) complex forms which resolves the HJ. Mg(2+) serves as cofactor.

The protein localises to the cytoplasm. The catalysed reaction is Endonucleolytic cleavage at a junction such as a reciprocal single-stranded crossover between two homologous DNA duplexes (Holliday junction).. Functionally, the RuvA-RuvB-RuvC complex processes Holliday junction (HJ) DNA during genetic recombination and DNA repair. Endonuclease that resolves HJ intermediates. Cleaves cruciform DNA by making single-stranded nicks across the HJ at symmetrical positions within the homologous arms, yielding a 5'-phosphate and a 3'-hydroxyl group; requires a central core of homology in the junction. The consensus cleavage sequence is 5'-(A/T)TT(C/G)-3'. Cleavage occurs on the 3'-side of the TT dinucleotide at the point of strand exchange. HJ branch migration catalyzed by RuvA-RuvB allows RuvC to scan DNA until it finds its consensus sequence, where it cleaves and resolves the cruciform DNA. In Bartonella bacilliformis (strain ATCC 35685 / KC583 / Herrer 020/F12,63), this protein is Crossover junction endodeoxyribonuclease RuvC.